Here is a 373-residue protein sequence, read N- to C-terminus: Polygalacturonase (373 aa).

The signal sequence occupies residues 1-24 (MVRNIVSRLCSQLFALPSSSLQER). A disulfide bond links Cys27 and Cys42. Residues Asn65 and Asn94 are each glycosylated (N-linked (GlcNAc...) asparagine). 8 PbH1 repeats span residues 136–158 (TGNSKITNLNIQNWPVHCFDITG), 159–197 (SSQLTISGLILDNRAGDKPNAKSGSLPAAHNTDGFDISS), 198–219 (SDHVTLDNNHVYNQDDCVAVTS), 220–240 (GTNIVVSNMYCSGGHGLSIGS), 249–270 (VDGVQFLSSQVVNSQNGCRIKS), 278–300 (INNVTYQNIALTNISTYGVDVQQ), 312–333 (TNGVKISNIKFIKVTGTVASSA), and 345–369 (CSGFTFSGNAITGGGKTSSCNYPTN). The active-site Proton donor is Asp212. Cys214 and Cys230 form a disulfide bridge. The active site involves His234. 2 N-linked (GlcNAc...) asparagine glycosylation sites follow: Asn280 and Asn290. Disulfide bonds link Cys340–Cys345 and Cys364–Cys371.

This sequence belongs to the glycosyl hydrolase 28 family.

It is found in the secreted. It carries out the reaction (1,4-alpha-D-galacturonosyl)n+m + H2O = (1,4-alpha-D-galacturonosyl)n + (1,4-alpha-D-galacturonosyl)m.. Functionally, involved in maceration and soft-rotting of plant tissue. Hydrolyzes the 1,4-alpha glycosidic bonds of de-esterified pectate in the smooth region of the plant cell wall. The polypeptide is Polygalacturonase (PGA) (Fusarium fujikuroi (Bakanae and foot rot disease fungus)).